A 177-amino-acid chain; its full sequence is uncharacterized protein (177 aa).

The tract at residues 1–27 (MSHSRRAAPTQDQCHTPGFPTSRETSG) is disordered.

This is an uncharacterized protein from Homo sapiens (Human).